The chain runs to 212 residues: FMN-dependent NADH:quinone oxidoreductase 1 (212 aa).

Residues Ser10, 16–18 (SHS), 97–100 (MYNF), and 145–148 (SRGG) each bind FMN.

This sequence belongs to the azoreductase type 1 family. In terms of assembly, homodimer. FMN serves as cofactor.

The enzyme catalyses 2 a quinone + NADH + H(+) = 2 a 1,4-benzosemiquinone + NAD(+). The catalysed reaction is N,N-dimethyl-1,4-phenylenediamine + anthranilate + 2 NAD(+) = 2-(4-dimethylaminophenyl)diazenylbenzoate + 2 NADH + 2 H(+). Functionally, quinone reductase that provides resistance to thiol-specific stress caused by electrophilic quinones. Its function is as follows. Also exhibits azoreductase activity. Catalyzes the reductive cleavage of the azo bond in aromatic azo compounds to the corresponding amines. This Pseudomonas fluorescens (strain Pf0-1) protein is FMN-dependent NADH:quinone oxidoreductase 1.